The primary structure comprises 316 residues: Transaldolase (316 aa).

The active-site Schiff-base intermediate with substrate is Lys-127.

The protein belongs to the transaldolase family. Type 2 subfamily.

It localises to the cytoplasm. It carries out the reaction D-sedoheptulose 7-phosphate + D-glyceraldehyde 3-phosphate = D-erythrose 4-phosphate + beta-D-fructose 6-phosphate. It functions in the pathway carbohydrate degradation; pentose phosphate pathway; D-glyceraldehyde 3-phosphate and beta-D-fructose 6-phosphate from D-ribose 5-phosphate and D-xylulose 5-phosphate (non-oxidative stage): step 2/3. In terms of biological role, transaldolase is important for the balance of metabolites in the pentose-phosphate pathway. This is Transaldolase from Helicobacter pylori (strain P12).